The sequence spans 104 residues: MKASKISDSRLRGIDGTVDSPCRHCIARVVILAFLDWQANTKGSAKSGCLSSSSKLCTLFNISMDLSLAWRMVEFLLFDSEDKERNSASSCLCMESNPPVFMAI.

This is an uncharacterized protein from Saccharomyces cerevisiae (strain ATCC 204508 / S288c) (Baker's yeast).